The following is a 56-amino-acid chain: Large ribosomal subunit protein bL32 (56 aa).

The disordered stretch occupies residues 1-27 (MAVQQNKKSRSRRDMRRSHDALTTAAV). A compositionally biased stretch (basic residues) spans 7–16 (KKSRSRRDMR).

The protein belongs to the bacterial ribosomal protein bL32 family.

This is Large ribosomal subunit protein bL32 from Actinobacillus pleuropneumoniae serotype 7 (strain AP76).